A 658-amino-acid polypeptide reads, in one-letter code: MNEFKLQSDFSLEGDQPKAVDELCESLNGGNSHQTLLGVTGSGKTFTMANVIQRLQRPTLVIAHNKTLAAQLCGEFKEFFPENAVEYFVSYYDYYQPEAYIPQTDTYIEKDASINDEIDKLRHSATSALFERRDVIIVASVSCIYGLGSPEEYREQVLSLRCGMEKDRDEILKGLVDIQYSRNDVNFTRGTFRVRGDVIEVFPASYTETAVRIELFGDEIERITEIDTLTGEILGERNHVAIFPASHFVTRRSKLEKAIESIQEELHEQLEYLKRQGKAVEAKRLEQRTNYDLEMLQEMGFCQGIENYSRHLIGRPAGSRPYCLIDYFPDDYLMVVDESHMTIPQIRGMYAGDMSRKQNLVDHGFRLPSALDNRPLKFQEFEKMINQNIYVSATPGPYEKEHSERIVEQIIRPTGLVDPETEVRPVKGQIDDLYSEINKRTDRNERVLVTTLTKKMAEDLTDYLREMGIRVRYMHSEIDTLERMEIIRDLRLGKFDVLVGINLLREGLDLPEVSLVAILDADKEGYLRDERSLIQTMGRAARNVNGRVIMYGDAITDSMRRAIDETNRRREKQIEFNARHNITPQTVQKKVHDVIEATRSAEDETEAATPENIQEMSAKERKELIAKLQEEMKQAAKELEFEKAAELRDLIMELKTAQ.

Positions 25 to 182 constitute a Helicase ATP-binding domain; it reads ESLNGGNSHQ…KGLVDIQYSR (158 aa). Residue 38–45 participates in ATP binding; sequence GVTGSGKT. The Beta-hairpin motif lies at 91–114; it reads YYDYYQPEAYIPQTDTYIEKDASI. The region spanning 429-595 is the Helicase C-terminal domain; it reads QIDDLYSEIN…TVQKKVHDVI (167 aa). Positions 622–657 constitute a UVR domain; it reads KELIAKLQEEMKQAAKELEFEKAAELRDLIMELKTA.

The protein belongs to the UvrB family. In terms of assembly, forms a heterotetramer with UvrA during the search for lesions. Interacts with UvrC in an incision complex.

Its subcellular location is the cytoplasm. The UvrABC repair system catalyzes the recognition and processing of DNA lesions. A damage recognition complex composed of 2 UvrA and 2 UvrB subunits scans DNA for abnormalities. Upon binding of the UvrA(2)B(2) complex to a putative damaged site, the DNA wraps around one UvrB monomer. DNA wrap is dependent on ATP binding by UvrB and probably causes local melting of the DNA helix, facilitating insertion of UvrB beta-hairpin between the DNA strands. Then UvrB probes one DNA strand for the presence of a lesion. If a lesion is found the UvrA subunits dissociate and the UvrB-DNA preincision complex is formed. This complex is subsequently bound by UvrC and the second UvrB is released. If no lesion is found, the DNA wraps around the other UvrB subunit that will check the other stand for damage. This chain is UvrABC system protein B, found in Natranaerobius thermophilus (strain ATCC BAA-1301 / DSM 18059 / JW/NM-WN-LF).